The primary structure comprises 292 residues: Small ribosomal subunit biogenesis GTPase RsgA (292 aa).

Residues 65–223 enclose the CP-type G domain; sequence KTELIRPTVA…VVDTPGFSSL (159 aa). GTP-binding positions include 114–117 and 165–173; these read NKLD and GPSGVGKST. Zn(2+) contacts are provided by cysteine 247, cysteine 252, histidine 254, and cysteine 260.

Belongs to the TRAFAC class YlqF/YawG GTPase family. RsgA subfamily. As to quaternary structure, monomer. Associates with 30S ribosomal subunit, binds 16S rRNA. The cofactor is Zn(2+).

The protein localises to the cytoplasm. In terms of biological role, one of several proteins that assist in the late maturation steps of the functional core of the 30S ribosomal subunit. Helps release RbfA from mature subunits. May play a role in the assembly of ribosomal proteins into the subunit. Circularly permuted GTPase that catalyzes slow GTP hydrolysis, GTPase activity is stimulated by the 30S ribosomal subunit. The polypeptide is Small ribosomal subunit biogenesis GTPase RsgA (Alkaliphilus metalliredigens (strain QYMF)).